The primary structure comprises 574 residues: NADH-ubiquinone oxidoreductase chain 5 (574 aa).

Transmembrane regions (helical) follow at residues 10–30 (VASK…LYMV), 50–70 (MMMT…VVMI), 87–107 (FINR…MLIF), 111–131 (LIIL…LVIY), 141–161 (GMIT…AIAW), 181–203 (YQAL…SSWL), 211–231 (TPVS…FLLI), 240–260 (VWWF…MAGL), 280–300 (LGMM…FHMV), 301–321 (THAM…HSHM), 340–360 (TSCL…SGFY), 381–401 (LILF…MCVV), 423–443 (MLLL…ILPL), 458–478 (TLML…TTNM), 489–509 (IINY…QFMM), and 554–574 (TPMN…LVAI).

It belongs to the complex I subunit 5 family.

The protein localises to the mitochondrion inner membrane. The enzyme catalyses a ubiquinone + NADH + 5 H(+)(in) = a ubiquinol + NAD(+) + 4 H(+)(out). Core subunit of the mitochondrial membrane respiratory chain NADH dehydrogenase (Complex I) that is believed to belong to the minimal assembly required for catalysis. Complex I functions in the transfer of electrons from NADH to the respiratory chain. The immediate electron acceptor for the enzyme is believed to be ubiquinone. The protein is NADH-ubiquinone oxidoreductase chain 5 (ND5) of Lumbricus terrestris (Common earthworm).